The following is a 285-amino-acid chain: Glutamate racemase (285 aa).

Residues 28–29 (DS) and 60–61 (YG) contribute to the substrate site. C92 functions as the Proton donor/acceptor in the catalytic mechanism. 93 to 94 (NT) is a binding site for substrate. C204 functions as the Proton donor/acceptor in the catalytic mechanism. 205-206 (TH) contributes to the substrate binding site.

Belongs to the aspartate/glutamate racemases family.

It catalyses the reaction L-glutamate = D-glutamate. It participates in cell wall biogenesis; peptidoglycan biosynthesis. Its function is as follows. Provides the (R)-glutamate required for cell wall biosynthesis. The protein is Glutamate racemase of Escherichia coli (strain UTI89 / UPEC).